Consider the following 209-residue polypeptide: Ribose 1,5-bisphosphate phosphokinase PhnN (209 aa).

Position 27–34 (27–34 (GPSGGGKD)) interacts with ATP.

The protein belongs to the ribose 1,5-bisphosphokinase family.

It carries out the reaction alpha-D-ribose 1,5-bisphosphate + ATP = 5-phospho-alpha-D-ribose 1-diphosphate + ADP. Its pathway is metabolic intermediate biosynthesis; 5-phospho-alpha-D-ribose 1-diphosphate biosynthesis; 5-phospho-alpha-D-ribose 1-diphosphate from D-ribose 5-phosphate (route II): step 3/3. Its function is as follows. Catalyzes the phosphorylation of ribose 1,5-bisphosphate to 5-phospho-D-ribosyl alpha-1-diphosphate (PRPP). The sequence is that of Ribose 1,5-bisphosphate phosphokinase PhnN from Chelativorans sp. (strain BNC1).